The following is a 202-amino-acid chain: Small ribosomal subunit protein uS4c (202 aa).

Positions 20-43 (GLTRKTTRRNSRPGQHGDQPRKPS) are disordered. The 63-residue stretch at 90-152 (MRLDNIVFRL…ARSKQLVENY (63 aa)) folds into the S4 RNA-binding domain.

It belongs to the universal ribosomal protein uS4 family. In terms of assembly, part of the 30S ribosomal subunit. Contacts protein S5. The interaction surface between S4 and S5 is involved in control of translational fidelity.

It is found in the plastid. It localises to the chloroplast. Functionally, one of the primary rRNA binding proteins, it binds directly to 16S rRNA where it nucleates assembly of the body of the 30S subunit. In terms of biological role, with S5 and S12 plays an important role in translational accuracy. This is Small ribosomal subunit protein uS4c (rps4) from Rhodomonas salina (Cryptomonas salina).